The sequence spans 140 residues: MPSQRSPTKRSPTKRSPQKGAGKGGKGSKRGGKARRRGGAAVRRRRRRRESYGIYIYKVLKQVHPDTGISSRGMSIMNSFVNDVFERVAAEASRLTKYNRRSTVSSREIQTAVRLLLPGELAKHAVSEGTKAVTKYTTSR.

The interval M1–R47 is disordered. 3 consecutive short sequence motifs (SPKK motif) follow at residues S6–K9, S11–K14, and S16–K19. 2 stretches are compositionally biased toward basic residues: residues P7–P17 and K26–R47. S11 and S16 each carry phosphoserine. A glycan (O-linked (GlcNAc) serine) is linked at S127. A Glycyl lysine isopeptide (Lys-Gly) (interchain with G-Cter in ubiquitin) cross-link involves residue K135.

It belongs to the histone H2B family. As to quaternary structure, the nucleosome is a histone octamer containing two molecules each of H2A, H2B, H3 and H4 assembled in one H3-H4 heterotetramer and two H2A-H2B heterodimers. The octamer wraps approximately 147 bp of DNA. Monoubiquitination of Lys-135 gives a specific tag for epigenetic transcriptional activation and is also prerequisite for histone H3 'Lys-4' and 'Lys-79' methylation. In terms of processing, phosphorylated on SPKK motifs 2 and 3; which may regulate DNA binding. Dephosphorylated during maturation of spermatids to mature sperm and rephosphorylated at fertilization. Post-translationally, glcNAcylation at Ser-127 promotes monoubiquitination of Lys-135. It fluctuates in response to extracellular glucose, and associates with transcribed genes.

The protein resides in the nucleus. It is found in the chromosome. In terms of biological role, core component of nucleosome. Nucleosomes wrap and compact DNA into chromatin, limiting DNA accessibility to the cellular machineries which require DNA as a template. Histones thereby play a central role in transcription regulation, DNA repair, DNA replication and chromosomal stability. DNA accessibility is regulated via a complex set of post-translational modifications of histones, also called histone code, and nucleosome remodeling. In Strongylocentrotus purpuratus (Purple sea urchin), this protein is Histone H2B.1, sperm.